The sequence spans 139 residues: 3-hydroxyacyl-[acyl-carrier-protein] dehydratase FabZ (139 aa).

The active site involves His46.

Belongs to the thioester dehydratase family. FabZ subfamily.

It is found in the cytoplasm. The enzyme catalyses a (3R)-hydroxyacyl-[ACP] = a (2E)-enoyl-[ACP] + H2O. Its function is as follows. Involved in unsaturated fatty acids biosynthesis. Catalyzes the dehydration of short chain beta-hydroxyacyl-ACPs and long chain saturated and unsaturated beta-hydroxyacyl-ACPs. The protein is 3-hydroxyacyl-[acyl-carrier-protein] dehydratase FabZ of Streptococcus pyogenes serotype M3 (strain ATCC BAA-595 / MGAS315).